The sequence spans 200 residues: Ribonuclease HII (200 aa).

The RNase H type-2 domain maps to 14-200 (ERVAGLDEAG…HRQSFTLFRD (187 aa)). Aspartate 20, glutamate 21, and aspartate 112 together coordinate a divalent metal cation.

Belongs to the RNase HII family. Mn(2+) serves as cofactor. Requires Mg(2+) as cofactor.

The protein localises to the cytoplasm. The catalysed reaction is Endonucleolytic cleavage to 5'-phosphomonoester.. In terms of biological role, endonuclease that specifically degrades the RNA of RNA-DNA hybrids. This chain is Ribonuclease HII, found in Salinibacter ruber (strain DSM 13855 / M31).